Reading from the N-terminus, the 360-residue chain is Photosystem II protein D1 1 (360 aa).

The next 3 helical transmembrane spans lie at 29–46 (YVGW…TATT), 118–133 (HFLI…EWEL), and 142–156 (WICV…AATA). Chlorophyll a is bound at residue His-118. Tyr-126 provides a ligand contact to pheophytin a. [CaMn4O5] cluster contacts are provided by Asp-170 and Glu-189. The helical transmembrane segment at 197–218 (FHMLGVAGVFGGSLFSAMHGSL) threads the bilayer. His-198 contributes to the chlorophyll a binding site. A quinone-binding positions include His-215 and 264-265 (SF). His-215 lines the Fe cation pocket. Residue His-272 coordinates Fe cation. The helical transmembrane segment at 274-288 (FLGAWPVVGIWFTAL) threads the bilayer. [CaMn4O5] cluster-binding residues include His-332, Glu-333, Asp-342, and Ala-344. The propeptide occupies 345–360 (AGEQAPVALQAPAING).

It belongs to the reaction center PufL/M/PsbA/D family. In terms of assembly, PSII is composed of 1 copy each of membrane proteins PsbA, PsbB, PsbC, PsbD, PsbE, PsbF, PsbH, PsbI, PsbJ, PsbK, PsbL, PsbM, PsbT, PsbX, PsbY, PsbZ, Psb30/Ycf12, peripheral proteins PsbO, CyanoQ (PsbQ), PsbU, PsbV and a large number of cofactors. It forms dimeric complexes. The D1/D2 heterodimer binds P680, chlorophylls that are the primary electron donor of PSII, and subsequent electron acceptors. It shares a non-heme iron and each subunit binds pheophytin, quinone, additional chlorophylls, carotenoids and lipids. D1 provides most of the ligands for the Mn4-Ca-O5 cluster of the oxygen-evolving complex (OEC). There is also a Cl(-1) ion associated with D1 and D2, which is required for oxygen evolution. The PSII complex binds additional chlorophylls, carotenoids and specific lipids. is required as a cofactor. Tyr-161 forms a radical intermediate that is referred to as redox-active TyrZ, YZ or Y-Z. Post-translationally, C-terminally processed by CtpA; processing is essential to allow assembly of the oxygen-evolving complex and thus photosynthetic growth.

The protein resides in the cellular thylakoid membrane. It carries out the reaction 2 a plastoquinone + 4 hnu + 2 H2O = 2 a plastoquinol + O2. In terms of biological role, photosystem II (PSII) is a light-driven water:plastoquinone oxidoreductase that uses light energy to abstract electrons from H(2)O, generating O(2) and a proton gradient subsequently used for ATP formation. It consists of a core antenna complex that captures photons, and an electron transfer chain that converts photonic excitation into a charge separation. The D1/D2 (PsbA/PsbD) reaction center heterodimer binds P680, the primary electron donor of PSII as well as several subsequent electron acceptors. The sequence is that of Photosystem II protein D1 1 from Picosynechococcus sp. (strain ATCC 27264 / PCC 7002 / PR-6) (Agmenellum quadruplicatum).